The sequence spans 288 residues: tRNA dimethylallyltransferase (288 aa).

Glycine 17–serine 24 is an ATP binding site. Threonine 19–serine 24 is a substrate binding site.

It belongs to the IPP transferase family. Monomer. Requires Mg(2+) as cofactor.

It carries out the reaction adenosine(37) in tRNA + dimethylallyl diphosphate = N(6)-dimethylallyladenosine(37) in tRNA + diphosphate. Functionally, catalyzes the transfer of a dimethylallyl group onto the adenine at position 37 in tRNAs that read codons beginning with uridine, leading to the formation of N6-(dimethylallyl)adenosine (i(6)A). This is tRNA dimethylallyltransferase from Ruegeria sp. (strain TM1040) (Silicibacter sp.).